The chain runs to 301 residues: UDP-N-acetylenolpyruvoylglucosamine reductase (301 aa).

The region spanning 26–193 (KTGGPAQYLA…VSATFGLEPG (168 aa)) is the FAD-binding PCMH-type domain. The active site involves Arg-172. Ser-222 serves as the catalytic Proton donor. The active site involves Glu-292.

This sequence belongs to the MurB family. FAD is required as a cofactor.

Its subcellular location is the cytoplasm. It carries out the reaction UDP-N-acetyl-alpha-D-muramate + NADP(+) = UDP-N-acetyl-3-O-(1-carboxyvinyl)-alpha-D-glucosamine + NADPH + H(+). It functions in the pathway cell wall biogenesis; peptidoglycan biosynthesis. Functionally, cell wall formation. The polypeptide is UDP-N-acetylenolpyruvoylglucosamine reductase (Lactobacillus johnsonii (strain CNCM I-12250 / La1 / NCC 533)).